The following is a 416-amino-acid chain: Serine hydroxymethyltransferase (416 aa).

(6S)-5,6,7,8-tetrahydrofolate is bound by residues leucine 121 and 125-127; that span reads GHL. Lysine 229 is modified (N6-(pyridoxal phosphate)lysine).

This sequence belongs to the SHMT family. As to quaternary structure, homodimer. Pyridoxal 5'-phosphate serves as cofactor.

It localises to the cytoplasm. It catalyses the reaction (6R)-5,10-methylene-5,6,7,8-tetrahydrofolate + glycine + H2O = (6S)-5,6,7,8-tetrahydrofolate + L-serine. Its pathway is one-carbon metabolism; tetrahydrofolate interconversion. The protein operates within amino-acid biosynthesis; glycine biosynthesis; glycine from L-serine: step 1/1. Functionally, catalyzes the reversible interconversion of serine and glycine with tetrahydrofolate (THF) serving as the one-carbon carrier. This reaction serves as the major source of one-carbon groups required for the biosynthesis of purines, thymidylate, methionine, and other important biomolecules. Also exhibits THF-independent aldolase activity toward beta-hydroxyamino acids, producing glycine and aldehydes, via a retro-aldol mechanism. The sequence is that of Serine hydroxymethyltransferase from Neisseria meningitidis serogroup C / serotype 2a (strain ATCC 700532 / DSM 15464 / FAM18).